Here is a 1041-residue protein sequence, read N- to C-terminus: FHIP family protein CG3558 (1041 aa).

Position 490 is a phosphoserine (serine 490). Disordered stretches follow at residues 619–648, 792–818, 858–879, 903–947, and 959–986; these read RPAD…SSSL, KGNE…QGQL, SMFS…SASS, DGRG…SNSS, and SNTT…SEPA. Polar residues predominate over residues 628-637; that stretch reads TDTTVATTAS. Position 797 is a phosphoserine (serine 797). A compositionally biased stretch (polar residues) spans 800 to 818; that stretch reads HHSQQQQMVTNSGQQQGQL. Polar residues predominate over residues 903–925; that stretch reads DGRGISQAQTSAGTCETSLSTQP. Low complexity predominate over residues 927 to 947; that stretch reads AGASRTGANATSTAASGSNSS. Positions 959–968 are enriched in polar residues; the sequence is SNTTTHSAST.

This sequence belongs to the FHIP family.

The chain is FHIP family protein CG3558 from Drosophila melanogaster (Fruit fly).